The following is a 252-amino-acid chain: Imidazole glycerol phosphate synthase subunit HisF (252 aa).

Catalysis depends on residues D11 and D130.

This sequence belongs to the HisA/HisF family. Heterodimer of HisH and HisF.

It localises to the cytoplasm. The catalysed reaction is 5-[(5-phospho-1-deoxy-D-ribulos-1-ylimino)methylamino]-1-(5-phospho-beta-D-ribosyl)imidazole-4-carboxamide + L-glutamine = D-erythro-1-(imidazol-4-yl)glycerol 3-phosphate + 5-amino-1-(5-phospho-beta-D-ribosyl)imidazole-4-carboxamide + L-glutamate + H(+). It participates in amino-acid biosynthesis; L-histidine biosynthesis; L-histidine from 5-phospho-alpha-D-ribose 1-diphosphate: step 5/9. Its function is as follows. IGPS catalyzes the conversion of PRFAR and glutamine to IGP, AICAR and glutamate. The HisF subunit catalyzes the cyclization activity that produces IGP and AICAR from PRFAR using the ammonia provided by the HisH subunit. This chain is Imidazole glycerol phosphate synthase subunit HisF, found in Staphylococcus aureus (strain bovine RF122 / ET3-1).